Reading from the N-terminus, the 480-residue chain is Glutamyl-tRNA(Gln) amidotransferase subunit A (480 aa).

Catalysis depends on charge relay system residues K70 and S145. S169 acts as the Acyl-ester intermediate in catalysis.

Belongs to the amidase family. GatA subfamily. As to quaternary structure, heterotrimer of A, B and C subunits.

The enzyme catalyses L-glutamyl-tRNA(Gln) + L-glutamine + ATP + H2O = L-glutaminyl-tRNA(Gln) + L-glutamate + ADP + phosphate + H(+). In terms of biological role, allows the formation of correctly charged Gln-tRNA(Gln) through the transamidation of misacylated Glu-tRNA(Gln) in organisms which lack glutaminyl-tRNA synthetase. The reaction takes place in the presence of glutamine and ATP through an activated gamma-phospho-Glu-tRNA(Gln). This chain is Glutamyl-tRNA(Gln) amidotransferase subunit A, found in Lactobacillus delbrueckii subsp. bulgaricus (strain ATCC BAA-365 / Lb-18).